We begin with the raw amino-acid sequence, 123 residues long: Holo-[acyl-carrier-protein] synthase (123 aa).

2 residues coordinate Mg(2+): aspartate 9 and glutamate 57.

The protein belongs to the P-Pant transferase superfamily. AcpS family. Mg(2+) serves as cofactor.

Its subcellular location is the cytoplasm. It carries out the reaction apo-[ACP] + CoA = holo-[ACP] + adenosine 3',5'-bisphosphate + H(+). In terms of biological role, transfers the 4'-phosphopantetheine moiety from coenzyme A to a Ser of acyl-carrier-protein. This Streptomyces avermitilis (strain ATCC 31267 / DSM 46492 / JCM 5070 / NBRC 14893 / NCIMB 12804 / NRRL 8165 / MA-4680) protein is Holo-[acyl-carrier-protein] synthase.